Here is a 536-residue protein sequence, read N- to C-terminus: Pre-mRNA-splicing factor SLU7 (536 aa).

Residues 22-42 (EARKAGLAPAEVDEDGKEINP) are disordered. Residues 94-111 (GACENCGAMTHDKKSCME) form a CCHC-type zinc finger. The tract at residues 178 to 201 (KLEEKDGEEGDENVASEEEDEEDG) is disordered. The segment covering 182–200 (KDGEEGDENVASEEEDEED) has biased composition (acidic residues).

Belongs to the SLU7 family.

It localises to the nucleus. Functionally, participates in the second catalytic step of pre-mRNA splicing, when the free hydroxyl group of exon I attacks the 3'-splice site to generate spliced mRNA and the excised lariat intron. This Oryza sativa subsp. indica (Rice) protein is Pre-mRNA-splicing factor SLU7.